The primary structure comprises 201 residues: Small ribosomal subunit protein uS5 (201 aa).

Residues 1-28 (MAGPQRRGSGAGGGERRDRKGRDGGASA) are disordered. Residues 14–23 (GERRDRKGRD) show a composition bias toward basic and acidic residues. In terms of domain architecture, S5 DRBM spans 34–97 (YVERVVAINR…EEAKKNFFKV (64 aa)).

This sequence belongs to the universal ribosomal protein uS5 family. Part of the 30S ribosomal subunit. Contacts proteins S4 and S8.

With S4 and S12 plays an important role in translational accuracy. In terms of biological role, located at the back of the 30S subunit body where it stabilizes the conformation of the head with respect to the body. The polypeptide is Small ribosomal subunit protein uS5 (Streptomyces griseus subsp. griseus (strain JCM 4626 / CBS 651.72 / NBRC 13350 / KCC S-0626 / ISP 5235)).